Consider the following 767-residue polypeptide: Two-component response regulator-like PRR73 (767 aa).

A disordered region spans residues methionine 1–glutamate 64. The Response regulatory domain maps to arginine 82 to tryptophan 200. Residues serine 205–glycine 214 show a composition bias toward low complexity. Disordered regions lie at residues serine 205 to tryptophan 272, arginine 312 to threonine 388, alanine 476 to valine 546, alanine 646 to glycine 701, and asparagine 727 to arginine 767. Residues aspartate 238–leucine 252 are compositionally biased toward acidic residues. Composition is skewed to polar residues over residues aspartate 263–tryptophan 272, arginine 343–threonine 361, and cysteine 488–alanine 497. The span at glycine 518–serine 531 shows a compositional bias: low complexity. Polar residues predominate over residues threonine 532–arginine 543. Over residues glycine 689–serine 700 the composition is skewed to gly residues. A CCT domain is found at arginine 712 to glutamine 754. A compositionally biased stretch (basic residues) spans asparagine 727–lysine 738.

This sequence belongs to the ARR-like family.

Its subcellular location is the nucleus. Controls photoperiodic flowering response. Seems to be one of the component of the circadian clock. Expression of several members of the ARR-like family is controlled by circadian rhythm. The particular coordinated sequential expression of PRR73, PRR37, PRR95, PRR59 and PPR1 result to circadian waves that may be at the basis of the endogenous circadian clock. This chain is Two-component response regulator-like PRR73 (PRR73), found in Oryza sativa subsp. indica (Rice).